A 362-amino-acid chain; its full sequence is 3-isopropylmalate dehydrogenase (362 aa).

An NAD(+)-binding site is contributed by 77–88; sequence GPKWGTGAVRPE. Substrate-binding residues include Arg-95, Arg-105, Arg-134, and Asp-223. Asp-223, Asp-248, and Asp-252 together coordinate Mg(2+). 287–298 provides a ligand contact to NAD(+); the sequence is GSAPDLPKGKVN.

The protein belongs to the isocitrate and isopropylmalate dehydrogenases family. As to quaternary structure, homodimer. Mg(2+) serves as cofactor. Mn(2+) is required as a cofactor.

It is found in the cytoplasm. It carries out the reaction (2R,3S)-3-isopropylmalate + NAD(+) = 4-methyl-2-oxopentanoate + CO2 + NADH. The protein operates within amino-acid biosynthesis; L-leucine biosynthesis; L-leucine from 3-methyl-2-oxobutanoate: step 3/4. Catalyzes the oxidation of 3-carboxy-2-hydroxy-4-methylpentanoate (3-isopropylmalate) to 3-carboxy-4-methyl-2-oxopentanoate. The product decarboxylates to 4-methyl-2 oxopentanoate. In Zygosaccharomyces bailii, this protein is 3-isopropylmalate dehydrogenase (LEU2).